We begin with the raw amino-acid sequence, 492 residues long: Bifunctional purine biosynthesis protein PurH (492 aa).

An MGS-like domain is found at 1–144; sequence MKKAILSVSN…KNYKHVTTIV (144 aa).

It belongs to the PurH family.

The enzyme catalyses (6R)-10-formyltetrahydrofolate + 5-amino-1-(5-phospho-beta-D-ribosyl)imidazole-4-carboxamide = 5-formamido-1-(5-phospho-D-ribosyl)imidazole-4-carboxamide + (6S)-5,6,7,8-tetrahydrofolate. It carries out the reaction IMP + H2O = 5-formamido-1-(5-phospho-D-ribosyl)imidazole-4-carboxamide. Its pathway is purine metabolism; IMP biosynthesis via de novo pathway; 5-formamido-1-(5-phospho-D-ribosyl)imidazole-4-carboxamide from 5-amino-1-(5-phospho-D-ribosyl)imidazole-4-carboxamide (10-formyl THF route): step 1/1. The protein operates within purine metabolism; IMP biosynthesis via de novo pathway; IMP from 5-formamido-1-(5-phospho-D-ribosyl)imidazole-4-carboxamide: step 1/1. This is Bifunctional purine biosynthesis protein PurH from Staphylococcus aureus (strain MSSA476).